Here is a 363-residue protein sequence, read N- to C-terminus: Ferrochelatase (363 aa).

Fe cation-binding residues include His209 and Glu290.

This sequence belongs to the ferrochelatase family.

Its subcellular location is the cytoplasm. The enzyme catalyses heme b + 2 H(+) = protoporphyrin IX + Fe(2+). Its pathway is porphyrin-containing compound metabolism; protoheme biosynthesis; protoheme from protoporphyrin-IX: step 1/1. Its function is as follows. Catalyzes the ferrous insertion into protoporphyrin IX. In Azoarcus sp. (strain BH72), this protein is Ferrochelatase.